Consider the following 231-residue polypeptide: Ion-translocating oxidoreductase complex subunit E (231 aa).

6 helical membrane passes run Ala18 to Ala38, Leu39 to Leu59, Thr63 to Val83, Leu86 to Val106, Ala125 to Leu145, and Pro182 to Gly202.

The protein belongs to the NqrDE/RnfAE family. In terms of assembly, the complex is composed of six subunits: RsxA, RsxB, RsxC, RsxD, RsxE and RsxG.

It localises to the cell inner membrane. Its function is as follows. Part of a membrane-bound complex that couples electron transfer with translocation of ions across the membrane. Required to maintain the reduced state of SoxR. The sequence is that of Ion-translocating oxidoreductase complex subunit E from Escherichia coli O7:K1 (strain IAI39 / ExPEC).